The following is an 84-amino-acid chain: Putative membrane protein insertion efficiency factor (84 aa).

The protein belongs to the UPF0161 family.

Its subcellular location is the cell inner membrane. Could be involved in insertion of integral membrane proteins into the membrane. This chain is Putative membrane protein insertion efficiency factor, found in Shewanella halifaxensis (strain HAW-EB4).